Consider the following 177-residue polypeptide: Large ribosomal subunit protein uL6 (177 aa).

The protein belongs to the universal ribosomal protein uL6 family. In terms of assembly, part of the 50S ribosomal subunit.

This protein binds to the 23S rRNA, and is important in its secondary structure. It is located near the subunit interface in the base of the L7/L12 stalk, and near the tRNA binding site of the peptidyltransferase center. The sequence is that of Large ribosomal subunit protein uL6 from Methanothermobacter thermautotrophicus (strain ATCC 29096 / DSM 1053 / JCM 10044 / NBRC 100330 / Delta H) (Methanobacterium thermoautotrophicum).